The chain runs to 430 residues: Enolase (430 aa).

(2R)-2-phosphoglycerate is bound at residue Q167. The active-site Proton donor is E209. D246, E289, and D316 together coordinate Mg(2+). (2R)-2-phosphoglycerate is bound by residues K341, R370, S371, and K392. The active-site Proton acceptor is K341.

It belongs to the enolase family. In terms of assembly, component of the RNA degradosome, a multiprotein complex involved in RNA processing and mRNA degradation. Requires Mg(2+) as cofactor.

The protein resides in the cytoplasm. Its subcellular location is the secreted. It localises to the cell surface. The enzyme catalyses (2R)-2-phosphoglycerate = phosphoenolpyruvate + H2O. It participates in carbohydrate degradation; glycolysis; pyruvate from D-glyceraldehyde 3-phosphate: step 4/5. Functionally, catalyzes the reversible conversion of 2-phosphoglycerate (2-PG) into phosphoenolpyruvate (PEP). It is essential for the degradation of carbohydrates via glycolysis. This chain is Enolase, found in Alteromonas mediterranea (strain DSM 17117 / CIP 110805 / LMG 28347 / Deep ecotype).